A 91-amino-acid chain; its full sequence is Cell division topological specificity factor (91 aa).

Belongs to the MinE family.

Functionally, prevents the cell division inhibition by proteins MinC and MinD at internal division sites while permitting inhibition at polar sites. This ensures cell division at the proper site by restricting the formation of a division septum at the midpoint of the long axis of the cell. In Bradyrhizobium diazoefficiens (strain JCM 10833 / BCRC 13528 / IAM 13628 / NBRC 14792 / USDA 110), this protein is Cell division topological specificity factor.